Reading from the N-terminus, the 364-residue chain is MSSSIEQKKGSTRQRKCGFCKSNRDKECGQLLISENQKVAAHHKCMLFSSALVSSHSDNESLGGFSIEDVQKEIKRGTKLMCSLCHCPGATIGCDVKTCHRTYHYHCALHDKAQIREKPSQGIYMVYCRKHKKTAHNSEADLEESFNEHELEPSSPKTKKKSRKGRPRKTNLKGLPEDSRSTSSHGTDEMESSSYRDRSPHRSSPNDTRPKCGFCHVGEEENEARGKLHIFNAKKAAAHYKCMLFSSGTVQLTTTSRAEFGDFDIKTVLQEIKRGKRMKCTLCSQPGATIGCEIKACVKTYHYHCGVQDKAKYIENMSRGIYKLYCKNHSGNDERDEEDEERESKSRGRVAIDQQLTQQQLNGN.

At S2 the chain carries N-acetylserine. Short sequence motifs (nuclear localization signal) lie at residues 13-16 (RQRK) and 129-133 (RKHKK). The C2HC pre-PHD-type 1 zinc-finger motif lies at 14–52 (QRKCGFCKSNRDKECGQLLISENQKVAAHHKCMLFSSAL). The extended PHD1 domain (ePHD1) stretch occupies residues 14-132 (QRKCGFCKSN…IYMVYCRKHK (119 aa)). The PHD-type 1 zinc finger occupies 80–132 (LMCSLCHCPGATIGCDVKTCHRTYHYHCALHDKAQIREKPSQGIYMVYCRKHK). Phosphoserine occurs at positions 138, 145, and 155. The tract at residues 139-211 (EADLEESFNE…RSSPNDTRPK (73 aa)) is disordered. The short motif at 157–169 (KTKKKSRKGRPRK) is the Nucleolar localization signal element. Basic residues predominate over residues 157-171 (KTKKKSRKGRPRKTN). K173 is covalently cross-linked (Glycyl lysine isopeptide (Lys-Gly) (interchain with G-Cter in SUMO2)). A phosphoserine mark is found at S183 and S199. The segment at 209–249 (RPKCGFCHVGEEENEARGKLHIFNAKKAAAHYKCMLFSSGT) adopts a C2HC pre-PHD-type 2 zinc-finger fold. The tract at residues 209–330 (RPKCGFCHVG…IYKLYCKNHS (122 aa)) is extended PHD2 domain (ePHD2). Residue K227 forms a Glycyl lysine isopeptide (Lys-Gly) (interchain with G-Cter in SUMO2) linkage. A PHD-type 2 zinc finger spans residues 278-330 (MKCTLCSQPGATIGCEIKACVKTYHYHCGVQDKAKYIENMSRGIYKLYCKNHS). The disordered stretch occupies residues 330-364 (SGNDERDEEDEERESKSRGRVAIDQQLTQQQLNGN). Polar residues predominate over residues 354-364 (QQLTQQQLNGN). At T357 the chain carries Phosphothreonine.

As to quaternary structure, interacts with UBTF. Interacts with the NuRD complex component RBBP4 (via the nucleolar localization motif), the interaction mediates transcriptional repression activity. In terms of tissue distribution, at 12.5 dpc it is highly expressed in the embryonic central nervous system and at lower levels in other tissues. Very low levels present throughout the adult brain.

The protein resides in the nucleus. It is found in the nucleolus. It localises to the chromosome. Its subcellular location is the centromere. The protein localises to the kinetochore. Its function is as follows. Transcriptional regulator that associates with ribosomal RNA promoters and suppresses ribosomal RNA (rRNA) transcription. The chain is PHD finger protein 6 (Phf6) from Mus musculus (Mouse).